We begin with the raw amino-acid sequence, 296 residues long: Nitrogenase iron protein 2 (296 aa).

11-18 (GKGGIGKS) contributes to the ATP binding site. Residue Cys99 participates in [4Fe-4S] cluster binding. Residue Arg102 is modified to ADP-ribosylarginine; by dinitrogenase reductase ADP-ribosyltransferase. Cys133 contacts [4Fe-4S] cluster.

This sequence belongs to the NifH/BchL/ChlL family. In terms of assembly, homodimer. The cofactor is [4Fe-4S] cluster. In terms of processing, the reversible ADP-ribosylation of Arg-102 inactivates the nitrogenase reductase and regulates nitrogenase activity.

The catalysed reaction is N2 + 8 reduced [2Fe-2S]-[ferredoxin] + 16 ATP + 16 H2O = H2 + 8 oxidized [2Fe-2S]-[ferredoxin] + 2 NH4(+) + 16 ADP + 16 phosphate + 6 H(+). Functionally, the key enzymatic reactions in nitrogen fixation are catalyzed by the nitrogenase complex, which has 2 components: the iron protein and the molybdenum-iron protein. The protein is Nitrogenase iron protein 2 (nifH2) of Azorhizobium caulinodans (strain ATCC 43989 / DSM 5975 / JCM 20966 / LMG 6465 / NBRC 14845 / NCIMB 13405 / ORS 571).